The primary structure comprises 617 residues: Protein fem-1 homolog C (617 aa).

M1 carries the post-translational modification N-acetylmethionine. ANK repeat units follow at residues 2–31 (DLKT…KEEV), 40–70 (NGAT…SIEV), 82–111 (EGAP…SVNN), 115–144 (TNST…DLEV), 148–177 (HGHT…DVNR), 181–210 (KGNT…KMEK), and 213–242 (YGMT…TSKT). TPR repeat units follow at residues 245-279 (INAL…RYSD) and 338-371 (SYYI…QQSN). 2 ANK repeats span residues 481 to 523 (NNFS…DVNV) and 527 to 556 (DDNS…HFDA).

It belongs to the fem-1 family. As to quaternary structure, component of a Cul2-RING (CRL2) E3 ubiquitin-protein ligase complex, also named ECS (Elongin BC-CUL2/5-SOCS-box protein) complex, composed of CUL2, Elongin BC (ELOB and ELOC), RBX1 and substrate-specific adapter FEM1C. In terms of tissue distribution, widely expressed. Highly expressed in kidney, cardiac tissue, skeletal muscle and testis. Expressed at lower levels in other tissues, including cartilage.

It functions in the pathway protein modification; protein ubiquitination. Functionally, substrate-recognition component of a Cul2-RING (CRL2) E3 ubiquitin-protein ligase complex of the DesCEND (destruction via C-end degrons) pathway, which recognizes a C-degron located at the extreme C terminus of target proteins, leading to their ubiquitination and degradation. The C-degron recognized by the DesCEND pathway is usually a motif of less than ten residues and can be present in full-length proteins, truncated proteins or proteolytically cleaved forms. The CRL2(FEM1C) complex specifically recognizes proteins with an arginine at the C-terminus: recognizes and binds proteins ending with -Lys/Arg-Xaa-Arg and -Lys/Arg-Xaa-Xaa-Arg C-degrons, such as SIL1 or OR51B2, leading to their ubiquitination and degradation. The CRL2(FEM1C) complex mediates ubiquitination and degradation of truncated MSRB1/SEPX1 selenoproteins produced by failed UGA/Sec decoding. Promotes ubiquitination and degradation of SLBP. The chain is Protein fem-1 homolog C from Homo sapiens (Human).